Here is a 508-residue protein sequence, read N- to C-terminus: Zinc finger CCCH-type with G patch domain-containing protein (508 aa).

Residues 154 to 177 (PCNYYLEGECRFDETRCRYSHGAL) form a C3H1-type zinc finger. The tract at residues 253-279 (DDELSSDSEETNETDGSDAANESDMDD) is disordered. A G-patch domain is found at 309–355 (TRGIGSKLMASMGYIHGTGLGSDGRGIVTPVSAQILPQGRSLDACME). Residues 486–495 (QAQESSLSKE) are compositionally biased toward polar residues. The segment at 486 to 508 (QAQESSLSKEQQTRKSKNKMFEF) is disordered. Over residues 499–508 (RKSKNKMFEF) the composition is skewed to basic residues.

The protein localises to the nucleus. Its function is as follows. Transcription repressor. This Drosophila virilis (Fruit fly) protein is Zinc finger CCCH-type with G patch domain-containing protein.